The primary structure comprises 580 residues: Probable mediator of RNA polymerase II transcription subunit 26a (580 aa).

One can recognise a TFIIS N-terminal domain in the interval 108-183 (DEVMRIRDIL…AEWKRLVDQW (76 aa)). Basic and acidic residues-rich tracts occupy residues 244 to 255 (RHSVESKHERKS), 280 to 290 (QTRREEADVRP), and 299 to 309 (VEPKRQTKQSR). The disordered stretch occupies residues 244–337 (RHSVESKHER…RKLAGPQQDK (94 aa)). Residues 347-368 (FEFAKRKLQESYHQHENAKRQR) are a coiled coil.

It belongs to the Mediator complex subunit 26 family. In terms of assembly, component of the Mediator complex.

The protein resides in the nucleus. Component of the Mediator complex, a coactivator involved in the regulated transcription of nearly all RNA polymerase II-dependent genes. Mediator functions as a bridge to convey information from gene-specific regulatory proteins to the basal RNA polymerase II transcription machinery. The Mediator complex, having a compact conformation in its free form, is recruited to promoters by direct interactions with regulatory proteins and serves for the assembly of a functional preinitiation complex with RNA polymerase II and the general transcription factors. May play a role in transcription elongation. The sequence is that of Probable mediator of RNA polymerase II transcription subunit 26a (MED26A) from Arabidopsis thaliana (Mouse-ear cress).